We begin with the raw amino-acid sequence, 102 residues long: MANTQLDHLHYTTEFTRNDLLIICKKFNLMLMDEDIISLLAIFIKMCLWLWKQFLKRGSKCSETSELLEKVKLQLAFTAYKYVDICFPEQMAYSRYIRWYIH.

A helical membrane pass occupies residues 36-55; the sequence is IISLLAIFIKMCLWLWKQFL.

The protein resides in the membrane. This is an uncharacterized protein from Homo sapiens (Human).